The chain runs to 30 residues: Glutathione S-transferase (30 aa).

This sequence belongs to the GST superfamily. In terms of assembly, monomer and homodimer.

The protein resides in the cytoplasm. The catalysed reaction is RX + glutathione = an S-substituted glutathione + a halide anion + H(+). Its function is as follows. Conjugation of reduced glutathione to a wide number of exogenous and endogenous hydrophobic electrophiles. This is Glutathione S-transferase from Pseudomonas fluorescens.